Consider the following 1699-residue polypeptide: Cilia- and flagella-associated protein 61 (1699 aa).

Residues 1–22 (MYSNNQLDNPNHSRSQYRNGDQ) show a composition bias toward polar residues. 3 disordered regions span residues 1-23 (MYSNNQLDNPNHSRSQYRNGDQS), 489-515 (QLKRPQKKVTKRPKRQKEEDKKEDEFK), and 1340-1365 (ERDANSENADKGFDDTQSRDGDEENQ). The segment covering 489-503 (QLKRPQKKVTKRPKR) has biased composition (basic residues). 2 stretches are compositionally biased toward basic and acidic residues: residues 504 to 515 (QKEEDKKEDEFK) and 1340 to 1359 (ERDANSENADKGFDDTQSRD).

The protein resides in the cell projection. Its subcellular location is the cilium. In terms of biological role, as component of a spoke-associated complex, regulates ciliary mobility by mediating a stable and functional assembly of the radial spoke 3 (RS3). This chain is Cilia- and flagella-associated protein 61, found in Tetrahymena thermophila (strain SB210).